Consider the following 218-residue polypeptide: Outer-membrane lipoprotein LolB (218 aa).

The N-terminal stretch at 1–20 is a signal peptide; that stretch reads MSQVIRTLALTGLALAGLSG. The N-palmitoyl cysteine moiety is linked to residue Cys-21. A lipid anchor (S-diacylglycerol cysteine) is attached at Cys-21.

Belongs to the LolB family. Monomer.

The protein resides in the cell outer membrane. In terms of biological role, plays a critical role in the incorporation of lipoproteins in the outer membrane after they are released by the LolA protein. The polypeptide is Outer-membrane lipoprotein LolB (Xanthomonas campestris pv. campestris (strain B100)).